Consider the following 298-residue polypeptide: Tyrosine recombinase XerC (298 aa).

One can recognise a Core-binding (CB) domain in the interval 1–85 (MQQQLDAYCA…AVRGLYHYLN (85 aa)). The Tyr recombinase domain maps to 106 to 285 (RLPKTLDTDR…DFQHLAAVYD (180 aa)). Active-site residues include arginine 146, lysine 170, histidine 237, arginine 240, and histidine 263. Tyrosine 272 serves as the catalytic O-(3'-phospho-DNA)-tyrosine intermediate.

It belongs to the 'phage' integrase family. XerC subfamily. Forms a cyclic heterotetrameric complex composed of two molecules of XerC and two molecules of XerD.

It is found in the cytoplasm. Site-specific tyrosine recombinase, which acts by catalyzing the cutting and rejoining of the recombining DNA molecules. The XerC-XerD complex is essential to convert dimers of the bacterial chromosome into monomers to permit their segregation at cell division. It also contributes to the segregational stability of plasmids. The polypeptide is Tyrosine recombinase XerC (Pseudomonas fluorescens (strain ATCC BAA-477 / NRRL B-23932 / Pf-5)).